The following is a 157-amino-acid chain: Protein-export protein SecB (157 aa).

The protein belongs to the SecB family. In terms of assembly, homotetramer, a dimer of dimers. One homotetramer interacts with 1 SecA dimer.

The protein localises to the cytoplasm. Its function is as follows. One of the proteins required for the normal export of preproteins out of the cell cytoplasm. It is a molecular chaperone that binds to a subset of precursor proteins, maintaining them in a translocation-competent state. It also specifically binds to its receptor SecA. In Rhodopseudomonas palustris (strain TIE-1), this protein is Protein-export protein SecB.